Consider the following 911-residue polypeptide: Alpha-actinin-4 (911 aa).

The tract at residues 1–269 (MVDYHAANQS…YVSSFYHAFS (269 aa)) is actin-binding. An interaction with VCL region spans residues 12–26 (QYGPSSAGNGAGGGG). Phosphotyrosine is present on Tyr-31. Residues 40 to 61 (RDLLLDPAWEKQQRKTFTAWCN) are interaction with VCL. 2 Calponin-homology (CH) domains span residues 50-154 (KQQR…LRFA) and 163-269 (TSAK…HAFS). Positions 84–88 (LMLLL) match the LXXLL motif motif. Residues 108–126 (KINNVNKALDFIASKGVKL) form an interaction with VCL region. At Lys-114 the chain carries N6-acetyllysine. Residues 177 to 192 (TAPYKNVNVQNFHISW) form a polyphosphoinositide (PIP2)-binding region. Lys-214 carries the post-translational modification N6-acetyllysine. Residue Thr-249 is modified to Phosphothreonine. Spectrin repeat units follow at residues 293 to 403 (HLME…WLLN), 413 to 518 (HLAE…ALEK), 528 to 639 (QLHL…ALLE), and 649 to 752 (HLRR…EVEN). Residues Lys-592 and Lys-625 each carry the N6-acetyllysine modification. The residue at position 696 (Ser-696) is a Phosphoserine. Residues 736–911 (WEQLLTTIAR…STALYGESDL (176 aa)) are mediates interaction with MICALL2. 2 consecutive EF-hand domains span residues 765–800 (EQMQ…LGYD) and 806–841 (QGEA…ETTD). Position 778 (Asp-778) interacts with Ca(2+). Lys-779 bears the N6-acetyllysine mark. Positions 780 and 789 each coordinate Ca(2+). N6-acetyllysine is present on Lys-859. Ser-909 carries the post-translational modification Phosphoserine.

Belongs to the alpha-actinin family. In terms of assembly, homodimer; antiparallel. Binds TRIM3 at the N-terminus. Interacts with MICALL2 (preferentially in opened conformation); stimulated by RAB13 activation. Identified in a complex with CASK, IQGAP1, MAGI2, NPHS1, SPTAN1 and SPTBN1. Identified in a IGF2BP1-dependent mRNP granule complex containing untranslated mRNAs. Component of the CART complex, at least composed of ACTN4, HGS/HRS, MYO5B and TRIM3. Interacts with MAGI1. Interacts with PDLIM2. Interacts with PPARG and RARA. Binds to VCL; this interaction triggers VCL conformational changes. Interacts with SEPTIN14. Interacts with IGSF8. As to expression, widely expressed.

The protein resides in the nucleus. It localises to the cytoplasm. It is found in the cell junction. The protein localises to the cytoskeleton. Its subcellular location is the stress fiber. The protein resides in the perinuclear region. In terms of biological role, F-actin cross-linking protein which is thought to anchor actin to a variety of intracellular structures. This is a bundling protein. Probably involved in vesicular trafficking via its association with the CART complex. The CART complex is necessary for efficient transferrin receptor recycling but not for EGFR degradation. Involved in tight junction assembly in epithelial cells probably through interaction with MICALL2. Links MICALL2 to the actin cytoskeleton and recruits it to the tight junctions. May also function as a transcriptional coactivator, stimulating transcription mediated by the nuclear hormone receptors PPARG and RARA. Association with IGSF8 regulates the immune synapse formation and is required for efficient T-cell activation. The protein is Alpha-actinin-4 of Homo sapiens (Human).